A 580-amino-acid polypeptide reads, in one-letter code: Dihydroxy-acid dehydratase (580 aa).

Asp95 contributes to the Mg(2+) binding site. Residue Cys136 coordinates [2Fe-2S] cluster. Residues Asp137 and Lys138 each coordinate Mg(2+). An N6-carboxylysine modification is found at Lys138. Cys209 contributes to the [2Fe-2S] cluster binding site. Residue Glu462 coordinates Mg(2+). The active-site Proton acceptor is Ser488.

It belongs to the IlvD/Edd family. Homodimer. It depends on [2Fe-2S] cluster as a cofactor. Mg(2+) serves as cofactor.

The enzyme catalyses (2R)-2,3-dihydroxy-3-methylbutanoate = 3-methyl-2-oxobutanoate + H2O. It carries out the reaction (2R,3R)-2,3-dihydroxy-3-methylpentanoate = (S)-3-methyl-2-oxopentanoate + H2O. It participates in amino-acid biosynthesis; L-isoleucine biosynthesis; L-isoleucine from 2-oxobutanoate: step 3/4. It functions in the pathway amino-acid biosynthesis; L-valine biosynthesis; L-valine from pyruvate: step 3/4. Functions in the biosynthesis of branched-chain amino acids. Catalyzes the dehydration of (2R,3R)-2,3-dihydroxy-3-methylpentanoate (2,3-dihydroxy-3-methylvalerate) into 2-oxo-3-methylpentanoate (2-oxo-3-methylvalerate) and of (2R)-2,3-dihydroxy-3-methylbutanoate (2,3-dihydroxyisovalerate) into 2-oxo-3-methylbutanoate (2-oxoisovalerate), the penultimate precursor to L-isoleucine and L-valine, respectively. The chain is Dihydroxy-acid dehydratase from Leuconostoc mesenteroides subsp. mesenteroides (strain ATCC 8293 / DSM 20343 / BCRC 11652 / CCM 1803 / JCM 6124 / NCDO 523 / NBRC 100496 / NCIMB 8023 / NCTC 12954 / NRRL B-1118 / 37Y).